A 453-amino-acid chain; its full sequence is Tryptophan dimethylallyltransferase cnsF (453 aa).

L-tryptophan contacts are provided by residues 84-85 (IL) and E93. Residues R104, K190, and Y192 each coordinate substrate. L-tryptophan-binding residues include Y194 and R248. Residues R261, K263, Y265, Q347, and Y349 each coordinate substrate.

This sequence belongs to the tryptophan dimethylallyltransferase family. As to quaternary structure, homodimer.

It catalyses the reaction L-tryptophan + dimethylallyl diphosphate = 4-(3-methylbut-2-enyl)-L-tryptophan + diphosphate. Its pathway is alkaloid biosynthesis. Its function is as follows. Tryptophan dimethylallyltransferase; part of the gene cluster that mediates the biosynthesis of communesins, a prominent class of indole alkaloids with great potential as pharmaceuticals. Communesins are biosynthesized by the coupling of tryptamine and aurantioclavine, two building blocks derived from L-tryptophan. The L-tryptophan decarboxylase cnsB converts L-tryptophan to tryptamine, whereas the tryptophan dimethylallyltransferase cnsF converts L-tryptophan to 4-dimethylallyl tryptophan which is further transformed to aurantioclavine by the aurantioclavine synthase cnsA, probably aided by the catalase cnsD. The cytochrome P450 monooxygenase cnsC catalyzes the heterodimeric coupling between the two different indole moieties, tryptamine and aurantioclavine, to construct vicinal quaternary stereocenters and yield the heptacyclic communesin scaffold. The O-methyltransferase cnsE then methylates the communesin scaffold to produce communesin K, the simplest characterized communesin that contains the heptacyclic core. The dioxygenase cnsJ converts communesin K into communesin I. Acylation to introduce the hexadienyl group at position N16 of communesin I by the acyltransferase cnsK leads to the production of communesin B. The hexadienyl group is produced by the highly reducing polyketide synthase cnsI, before being hydrolytically removed from cnsI by the serine hydrolase cnsH, converted into hexadienyl-CoA by the CoA ligase cnsG, and then transferred to communesin I by cnsK. Surprisingly, cnsK may also be a promiscuous acyltransferase that can tolerate a range of acyl groups, including acetyl-, propionyl-, and butyryl-CoA, which lead to communesins A, G and H respectively. The roles of the alpha-ketoglutarate-dependent dioxygenases cnsM and cnsP have still to be determined. This chain is Tryptophan dimethylallyltransferase cnsF, found in Penicillium expansum (Blue mold rot fungus).